Here is a 456-residue protein sequence, read N- to C-terminus: Exodeoxyribonuclease 7 large subunit (456 aa).

It belongs to the XseA family. In terms of assembly, heterooligomer composed of large and small subunits.

It is found in the cytoplasm. The enzyme catalyses Exonucleolytic cleavage in either 5'- to 3'- or 3'- to 5'-direction to yield nucleoside 5'-phosphates.. Its function is as follows. Bidirectionally degrades single-stranded DNA into large acid-insoluble oligonucleotides, which are then degraded further into small acid-soluble oligonucleotides. The chain is Exodeoxyribonuclease 7 large subunit from Escherichia coli (strain SE11).